Reading from the N-terminus, the 129-residue chain is ATP synthase epsilon chain (129 aa).

Belongs to the ATPase epsilon chain family. F-type ATPases have 2 components, CF(1) - the catalytic core - and CF(0) - the membrane proton channel. CF(1) has five subunits: alpha(3), beta(3), gamma(1), delta(1), epsilon(1). CF(0) has three main subunits: a, b and c.

The protein localises to the cell inner membrane. Its function is as follows. Produces ATP from ADP in the presence of a proton gradient across the membrane. This chain is ATP synthase epsilon chain, found in Campylobacter jejuni subsp. jejuni serotype O:6 (strain 81116 / NCTC 11828).